Here is a 24-residue protein sequence, read N- to C-terminus: DYE-linked aldehyde dehydrogenase, alpha chain (24 aa).

Heterotetramer composed of an alpha, a beta and two gamma chains. Mo-molybdopterin cytosine dinucleotide serves as cofactor.

Functionally, active with aldehydes and formate esters as substrates. This is DYE-linked aldehyde dehydrogenase, alpha chain from Amycolatopsis methanolica.